The sequence spans 211 residues: Small ribosomal subunit protein uS3 (211 aa).

Residues Leu-38 to Lys-106 form the KH type-2 domain.

It belongs to the universal ribosomal protein uS3 family. As to quaternary structure, part of the 30S ribosomal subunit. Forms a tight complex with proteins S10 and S14.

Its function is as follows. Binds the lower part of the 30S subunit head. Binds mRNA in the 70S ribosome, positioning it for translation. This Ehrlichia canis (strain Jake) protein is Small ribosomal subunit protein uS3.